Here is a 160-residue protein sequence, read N- to C-terminus: SsrA-binding protein (160 aa).

Belongs to the SmpB family.

It localises to the cytoplasm. Required for rescue of stalled ribosomes mediated by trans-translation. Binds to transfer-messenger RNA (tmRNA), required for stable association of tmRNA with ribosomes. tmRNA and SmpB together mimic tRNA shape, replacing the anticodon stem-loop with SmpB. tmRNA is encoded by the ssrA gene; the 2 termini fold to resemble tRNA(Ala) and it encodes a 'tag peptide', a short internal open reading frame. During trans-translation Ala-aminoacylated tmRNA acts like a tRNA, entering the A-site of stalled ribosomes, displacing the stalled mRNA. The ribosome then switches to translate the ORF on the tmRNA; the nascent peptide is terminated with the 'tag peptide' encoded by the tmRNA and targeted for degradation. The ribosome is freed to recommence translation, which seems to be the essential function of trans-translation. This Enterobacter sp. (strain 638) protein is SsrA-binding protein.